We begin with the raw amino-acid sequence, 440 residues long: 5-hydroxytryptamine receptor 6 (440 aa).

Residues 1 to 27 are Extracellular-facing; sequence MVPEPGPVNSSTPAWGPGPPPAPGGSG. N-linked (GlcNAc...) asparagine glycosylation occurs at Asn9. Residues 28 to 52 traverse the membrane as a helical segment; that stretch reads WVAAALCVVIVLTAAANSLLIALIC. The Cytoplasmic segment spans residues 53–62; it reads TQPALRNTSN. Residues 63–88 traverse the membrane as a helical segment; sequence FFLVSLFTSDLMVGLVVMPPAMLNAL. At 89–96 the chain is on the extracellular side; that stretch reads YGRWVLAR. The helical transmembrane segment at 97–122 threads the bilayer; sequence GLCLLWTAFDVMCCSASILNLCLISL. Cys99 and Cys180 are joined by a disulfide. Asp106 provides a ligand contact to serotonin. The Cytoplasmic portion of the chain corresponds to 123–142; it reads DRYLLILSPLRYKLRMTAPR. The helical transmembrane segment at 143 to 167 threads the bilayer; that stretch reads ALALILGAWSLAALASFLPLLLGWH. The Extracellular segment spans residues 168-185; it reads ELGKARTSAPGQCRLLAS. The helical transmembrane segment at 186-209 threads the bilayer; that stretch reads LPYVLVASGVTFFLPSGAICFTYC. Residues 210-268 are Cytoplasmic-facing; the sequence is RILLAARKQAVQVASLTTGTATAGQALETLQVPRTPRPGMESADSRRLTTKHSRKALKA. A helical transmembrane segment spans residues 269-295; that stretch reads SLTLGILLSMFFVTWLPFFVASIAQAV. Topologically, residues 296–301 are extracellular; that stretch reads CDCISP. The chain crosses the membrane as a helical span at residues 302–325; the sequence is GLFDVLTWLGYCNSTMNPIIYPLF. The Cytoplasmic segment spans residues 326-440; that stretch reads MRDFKRALGR…RQHPLGSPMN (115 aa).

Belongs to the G-protein coupled receptor 1 family. As to quaternary structure, interacts with CDK5. Interacts with MTOR. Interacts with RPTOR and NF1.

Its subcellular location is the cell membrane. Functionally, G-protein coupled receptor for 5-hydroxytryptamine (serotonin), a biogenic hormone that functions as a neurotransmitter, a hormone and a mitogen. Also has a high affinity for tricyclic psychotropic drugs. Ligand binding causes a conformation change that triggers signaling via guanine nucleotide-binding proteins (G proteins) and modulates the activity of downstream effectors. HTR6 is coupled to G(s) G alpha proteins and mediates activation of adenylate cyclase activity. Controls pyramidal neurons migration during corticogenesis, through the regulation of CDK5 activity. Is an activator of mTOR signaling. The polypeptide is 5-hydroxytryptamine receptor 6 (Mus musculus (Mouse)).